The chain runs to 626 residues: DNA primase (626 aa).

The CHC2-type zinc finger occupies 39 to 63 (CPFHGEKTPSFSVSPEKQIFHCFGC). The Toprim domain maps to 264 to 346 (EEITLMEGFM…DVFVLQLPAG (83 aa)). Positions 270, 314, and 316 each coordinate Mg(2+).

It belongs to the DnaG primase family. In terms of assembly, monomer. Interacts with DnaB. It depends on Zn(2+) as a cofactor. Mg(2+) serves as cofactor.

It carries out the reaction ssDNA + n NTP = ssDNA/pppN(pN)n-1 hybrid + (n-1) diphosphate.. In terms of biological role, RNA polymerase that catalyzes the synthesis of short RNA molecules used as primers for DNA polymerase during DNA replication. The chain is DNA primase from Listeria monocytogenes serovar 1/2a (strain ATCC BAA-679 / EGD-e).